Consider the following 507-residue polypeptide: ATP synthase subunit alpha, chloroplastic (507 aa).

Residue Gly-170–Thr-177 participates in ATP binding.

Belongs to the ATPase alpha/beta chains family. In terms of assembly, F-type ATPases have 2 components, CF(1) - the catalytic core - and CF(0) - the membrane proton channel. CF(1) has five subunits: alpha(3), beta(3), gamma(1), delta(1), epsilon(1). CF(0) has four main subunits: a, b, b' and c.

The protein resides in the plastid. Its subcellular location is the chloroplast thylakoid membrane. It catalyses the reaction ATP + H2O + 4 H(+)(in) = ADP + phosphate + 5 H(+)(out). Its function is as follows. Produces ATP from ADP in the presence of a proton gradient across the membrane. The alpha chain is a regulatory subunit. The chain is ATP synthase subunit alpha, chloroplastic from Manihot esculenta (Cassava).